We begin with the raw amino-acid sequence, 906 residues long: MCRKEPFLLPTALCILAALVLHQGPVEALGGSRLCKTGFLEDVYHASVYRSVHEGQPLLNVKFTDCGADRRIHYETSNPTDFRIDGDGIVCASRTFDISPEQAEFLVYAQDEDTRELWHVTVKITLRPRHVQDLHQGFHKVREIKFSTQRKHNGLQRQKRDWVIPPINVPENARGTFPQELVGIRSDRDKSLSLRYSVTGPGADQPPLGVFIINPISGQLSVTKPLDREQIATFHLRAHAVDVNGNQVENPIDIVINVIDMNDNRPEFLHQIWNGTIPEGSKPGTYVMTVTAIDGDDPKQPNGMLRYKILSQTPASSSPNMFTINNETGDIITLAAGLDREKVQRYTLIIQATDMEGNPTYGLSNTATAVIAVTDVNDNPPEFTAMTFYGEVPENRVDVVVANLTVTDKDQPHTPAWNAVYRIVGGDGTGRFAIKTDANSNDGLVTVVKPIDYETKSTYILTVVAENQVELIRGIQYKPESTATVSVTIIDVNENPYFTPNPKLIRQEEGLFAGKLLTTFSAQDPDRYMQQTIRYSKLSDPANWLKIDPVNGFITTTAVLDRESIYVKNNMYNATFLATDSGIPPMSGTGTLQIYLLDINDNAPYVYPQEVEICDRPDPNAINITALDADINPNAGPFIFELPYSPMDIKKNWTVTRLSGDHAQLSLKIGSLDYGIYNIPIQITDSGNPAMSNTSYLRVKVCSCEHGYCSTTAPIIGTGLGTGAIIAILLCIIILLTLVLMFVVWMKRRDKERQAKQLLIDPEDDVRDNILKYDEEGGGEEDQDYDLSQLQQPDTVEPDTIKPVGIRRMDERPIHAEPQYPIRSAAPHPGDIGDFINEGLKAADNDPTAPPYDSLLVFDYEGSGSTAGSLSSLNSSSSGGEQDYDYLNDWGPRFKKLADMYGGSDD.

The first 28 residues, 1 to 28, serve as a signal peptide directing secretion; that stretch reads MCRKEPFLLPTALCILAALVLHQGPVEA. Residues 29 to 160 constitute a propeptide that is removed on maturation; it reads LGGSRLCKTG…KHNGLQRQKR (132 aa). Cadherin domains are found at residues 161–268, 269–383, 384–498, 499–604, and 605–714; these read DWVI…RPEF, LHQI…PPEF, TAMT…NPYF, TPNP…DNAP, and YVYP…TTAP. Residues 161 to 724 lie on the Extracellular side of the membrane; it reads DWVIPPINVP…IIGTGLGTGA (564 aa). Residues glutamate 171, aspartate 227, glutamate 229, aspartate 260, methionine 261, asparagine 262, aspartate 263, and asparagine 264 each contribute to the Ca(2+) site. An N-linked (GlcNAc...) asparagine glycan is attached at asparagine 274. Residues aspartate 294, aspartate 296, and asparagine 302 each coordinate Ca(2+). Asparagine 326 is a glycosylation site (N-linked (GlcNAc...) asparagine). Aspartate 354 lines the Ca(2+) pocket. Residues asparagine 403, asparagine 573, asparagine 623, asparagine 652, and asparagine 693 are each glycosylated (N-linked (GlcNAc...) asparagine). The chain crosses the membrane as a helical span at residues 725-746; it reads IIAILLCIIILLTLVLMFVVWM. The Cytoplasmic portion of the chain corresponds to 747-906; that stretch reads KRRDKERQAK…LADMYGGSDD (160 aa). Disordered regions lie at residues 775–800 and 863–884; these read EEGG…EPDT and SGST…EQDY. A compositionally biased stretch (acidic residues) spans 776 to 785; sequence EGGGEEDQDY. Positions 863 to 880 are enriched in low complexity; that stretch reads SGSTAGSLSSLNSSSSGG.

In terms of assembly, homodimer (via extracellular region). Can also form heterodimers with other cadherins (via extracellular region). Dimerization occurs in trans, i.e. with a cadherin chain from another cell.

It is found in the cell membrane. The protein resides in the sarcolemma. Its subcellular location is the cell junction. The protein localises to the cell surface. It localises to the desmosome. It is found in the adherens junction. In terms of biological role, calcium-dependent cell adhesion protein; preferentially mediates homotypic cell-cell adhesion. Cadherins may thus contribute to the sorting of heterogeneous cell types, and thereby play an important role during embryonic development. Required for proper neurite branching. Required for pre- and postsynaptic organization. This chain is Cadherin-2A (cdh2-a), found in Xenopus laevis (African clawed frog).